A 102-amino-acid polypeptide reads, in one-letter code: Small ribosomal subunit protein uS10 (102 aa).

This sequence belongs to the universal ribosomal protein uS10 family. Part of the 30S ribosomal subunit.

In terms of biological role, involved in the binding of tRNA to the ribosomes. This Clostridium beijerinckii (strain ATCC 51743 / NCIMB 8052) (Clostridium acetobutylicum) protein is Small ribosomal subunit protein uS10.